The chain runs to 540 residues: Chaperonin GroEL 1 (540 aa).

ATP is bound by residues 30–33 (TLGP), Lys51, 87–91 (DGTTT), Gly415, 480–482 (NAA), and Asp496.

Belongs to the chaperonin (HSP60) family. Forms a cylinder of 14 subunits composed of two heptameric rings stacked back-to-back. Interacts with the co-chaperonin GroES.

The protein localises to the cytoplasm. The catalysed reaction is ATP + H2O + a folded polypeptide = ADP + phosphate + an unfolded polypeptide.. In terms of biological role, together with its co-chaperonin GroES, plays an essential role in assisting protein folding. The GroEL-GroES system forms a nano-cage that allows encapsulation of the non-native substrate proteins and provides a physical environment optimized to promote and accelerate protein folding. The polypeptide is Chaperonin GroEL 1 (Bradyrhizobium diazoefficiens (strain JCM 10833 / BCRC 13528 / IAM 13628 / NBRC 14792 / USDA 110)).